The following is a 540-amino-acid chain: CUB domain-containing protein 2 (540 aa).

The N-terminal stretch at M1–A22 is a signal peptide. Over Q23–D516 the chain is Extracellular. 6 disulfides stabilise this stretch: C30/C56, C83/C106, C145/C171, C198/C218, C257/C283, and C314/C336. 3 CUB domains span residues C30–D143, C145–G255, and C257–V373. An N-linked (GlcNAc...) asparagine glycan is attached at N40. N267 carries N-linked (GlcNAc...) asparagine glycosylation. Residues N377, N435, and N436 are each glycosylated (N-linked (GlcNAc...) asparagine). Residues I517–L537 form a helical membrane-spanning segment. Over M538–L540 the chain is Cytoplasmic.

Its subcellular location is the membrane. The protein is CUB domain-containing protein 2 (CDCP2) of Homo sapiens (Human).